A 268-amino-acid polypeptide reads, in one-letter code: Secreted RxLR effector protein 5 (268 aa).

Positions M1–A21 are cleaved as a signal peptide. The short motif at R48–R63 is the RxLR-dEER element. N104 carries an N-linked (GlcNAc...) asparagine glycan.

This sequence belongs to the RxLR effector family.

It localises to the secreted. The protein localises to the host nucleus. Its function is as follows. Effector that acts as a broad suppressor of cell death to interrupt plant immunity. Inhibits cell death induced by cell death-inducing proteins, including the PAMP elicitor INF1 from P.infestans. In Plasmopara viticola (Downy mildew of grapevine), this protein is Secreted RxLR effector protein 5.